The chain runs to 300 residues: 2-dehydropantoate 2-reductase (300 aa).

Residues 7–12 (GAGAIG), lysine 74, asparagine 99, and alanine 123 each bind NADP(+). Lysine 179 serves as the catalytic Proton donor. Residues lysine 179, asparagine 183, asparagine 187, asparagine 197, and 246-249 (NYNS) contribute to the substrate site. Glutamate 261 is an NADP(+) binding site.

The protein belongs to the ketopantoate reductase family.

It localises to the cytoplasm. The enzyme catalyses (R)-pantoate + NAD(+) = 2-dehydropantoate + NADH + H(+). The catalysed reaction is (R)-pantoate + NADP(+) = 2-dehydropantoate + NADPH + H(+). It functions in the pathway cofactor biosynthesis; coenzyme A biosynthesis. Functionally, catalyzes the NAD(P)H-dependent reduction of ketopantoate into pantoic acid. This Pyrococcus abyssi (strain GE5 / Orsay) protein is 2-dehydropantoate 2-reductase (apbA).